Reading from the N-terminus, the 620-residue chain is MRDSNHRSLTSNKPIVTITSTVYDRRALDINSSIPLINSLNYLTYLTSNSSKVRETVANDGALERLVSILRSCHLSLFELLDLDLENFNEHENIKDLWKEKRLALCAWKWTLTFQCLVLTGTRGTEQIRKKVVMSGVLSVLVTVLDNYLLYHKNYDFIKDQTMTFDFKGITTETMYKFMRKDENETYQQYIEFITGQDKLKLSTDKNFLNERLVAPSMTIPTDFSDIWGRFADLASNFEPDQERHDDDIDIDSEVESENFDAHKNFFSQPDINRPTISTPREFFLGRIVPKQDDVIWSLQLLAFVSKYTYMKSTLQNVELVESLSFRSMAYKIKQRISEENDLEEQERDVTVKLSSLYPYLSKNPENNSKVKALDTSKMDPFFKELEELSNRCQQEEQNEICNNHCPVLNLFERYRVPKPSDDNAYGKDKERINLRKKISDNFERRWSYDKMKKELTNIVYKNKVLTNVVNIFPLVEKYTVSAENTHDVIYWSSVIMRNSCRKNEILGVRQCANFSCGKWEDFPRQFAKCRRCKRTKYCSRKCQLKAWGYHRYWCHEVGSSHMRSTNTTTGVNTPNEPSSLNATATTAADVSNSTSTFTPNISTTVPDEISNRDENSIPE.

An MYND-type; degenerate zinc finger spans residues 514-555; that stretch reads NFSCGKWEDFPRQFAKCRRCKRTKYCSRKCQLKAWGYHRYWC. Zn(2+) contacts are provided by Cys530, Cys533, His551, and Cys555. Residues 563-606 are compositionally biased toward polar residues; sequence MRSTNTTTGVNTPNEPSSLNATATTAADVSNSTSTFTPNISTTV. The tract at residues 563-620 is disordered; the sequence is MRSTNTTTGVNTPNEPSSLNATATTAADVSNSTSTFTPNISTTVPDEISNRDENSIPE. The segment covering 610 to 620 has biased composition (basic and acidic residues); the sequence is ISNRDENSIPE.

Belongs to the MUB1/samB family. Interacts with UBR2 and RPN4.

Its subcellular location is the cytoplasm. In terms of biological role, involved in the determination of the onset of polarized growth. Required for the ubiquitin-dependent degradation of RPN4. Cooperates with UBR2 to transfer ubiquitin from RAD6 to RPN4. This is MYND-type zinc finger protein MUB1 (MUB1) from Saccharomyces cerevisiae (strain ATCC 204508 / S288c) (Baker's yeast).